A 401-amino-acid chain; its full sequence is Argininosuccinate synthase (401 aa).

Residues 11 to 19 and A38 each bind ATP; that span reads AYSGGLDTS. L-citrulline contacts are provided by Y89 and S94. G119 is an ATP binding site. T121, N125, and D126 together coordinate L-aspartate. N125 contacts L-citrulline. L-citrulline contacts are provided by R129, S180, S189, E265, and Y277.

The protein belongs to the argininosuccinate synthase family. Type 1 subfamily. In terms of assembly, homotetramer.

Its subcellular location is the cytoplasm. The enzyme catalyses L-citrulline + L-aspartate + ATP = 2-(N(omega)-L-arginino)succinate + AMP + diphosphate + H(+). It functions in the pathway amino-acid biosynthesis; L-arginine biosynthesis; L-arginine from L-ornithine and carbamoyl phosphate: step 2/3. This Syntrophus aciditrophicus (strain SB) protein is Argininosuccinate synthase.